A 488-amino-acid chain; its full sequence is Phenylalanine--tRNA ligase alpha subunit (488 aa).

Residues Thr-332, 371–373 (QLD), and Phe-410 each bind L-phenylalanine. Mg(2+) is bound at residue Glu-412. L-phenylalanine is bound at residue Phe-435.

It belongs to the class-II aminoacyl-tRNA synthetase family. Phe-tRNA synthetase alpha subunit type 2 subfamily. As to quaternary structure, tetramer of two alpha and two beta subunits. Requires Mg(2+) as cofactor.

It is found in the cytoplasm. The enzyme catalyses tRNA(Phe) + L-phenylalanine + ATP = L-phenylalanyl-tRNA(Phe) + AMP + diphosphate + H(+). The polypeptide is Phenylalanine--tRNA ligase alpha subunit (Aeropyrum pernix (strain ATCC 700893 / DSM 11879 / JCM 9820 / NBRC 100138 / K1)).